We begin with the raw amino-acid sequence, 335 residues long: Probable nicotianamine synthase 3 (335 aa).

The protein belongs to the nicotianamine synthase (NAS)-like family.

It catalyses the reaction 3 S-adenosyl-L-methionine = nicotianamine + 3 S-methyl-5'-thioadenosine + 3 H(+). In terms of biological role, synthesizes nicotianamine, a polyamine that is the first intermediate in the synthesis of the phytosiderophores of the mugineic acid type found in gramineae which serves as a sensor for the physiological iron status within the plant, and/or might be involved in the transport of iron. The polypeptide is Probable nicotianamine synthase 3 (NAS3) (Hordeum vulgare (Barley)).